A 341-amino-acid chain; its full sequence is S-adenosylmethionine:tRNA ribosyltransferase-isomerase (341 aa).

Belongs to the QueA family. Monomer.

The protein resides in the cytoplasm. The enzyme catalyses 7-aminomethyl-7-carbaguanosine(34) in tRNA + S-adenosyl-L-methionine = epoxyqueuosine(34) in tRNA + adenine + L-methionine + 2 H(+). It functions in the pathway tRNA modification; tRNA-queuosine biosynthesis. Its function is as follows. Transfers and isomerizes the ribose moiety from AdoMet to the 7-aminomethyl group of 7-deazaguanine (preQ1-tRNA) to give epoxyqueuosine (oQ-tRNA). This chain is S-adenosylmethionine:tRNA ribosyltransferase-isomerase, found in Clostridium tetani (strain Massachusetts / E88).